The primary structure comprises 406 residues: Serine/threonine transporter SstT (406 aa).

The next 9 helical transmembrane spans lie at L21–L41, F45–I65, I79–F99, A138–L158, V179–I199, L213–V233, I285–L305, L313–A333, and I360–T380.

The protein belongs to the dicarboxylate/amino acid:cation symporter (DAACS) (TC 2.A.23) family.

Its subcellular location is the cell membrane. It carries out the reaction L-serine(in) + Na(+)(in) = L-serine(out) + Na(+)(out). The catalysed reaction is L-threonine(in) + Na(+)(in) = L-threonine(out) + Na(+)(out). Involved in the import of serine and threonine into the cell, with the concomitant import of sodium (symport system). In Desulfitobacterium hafniense (strain Y51), this protein is Serine/threonine transporter SstT.